Reading from the N-terminus, the 125-residue chain is Secretion system apparatus protein SsaO (125 aa).

The protein is Secretion system apparatus protein SsaO (ssaO) of Salmonella typhimurium (strain LT2 / SGSC1412 / ATCC 700720).